The chain runs to 174 residues: ATP-dependent protease subunit HslV (174 aa).

Thr2 is an active-site residue. 3 residues coordinate Na(+): Gly157, Cys160, and Thr163.

Belongs to the peptidase T1B family. HslV subfamily. A double ring-shaped homohexamer of HslV is capped on each side by a ring-shaped HslU homohexamer. The assembly of the HslU/HslV complex is dependent on binding of ATP.

The protein resides in the cytoplasm. It carries out the reaction ATP-dependent cleavage of peptide bonds with broad specificity.. Allosterically activated by HslU binding. Protease subunit of a proteasome-like degradation complex believed to be a general protein degrading machinery. This chain is ATP-dependent protease subunit HslV, found in Shewanella pealeana (strain ATCC 700345 / ANG-SQ1).